The sequence spans 190 residues: Potassium-transporting ATPase KdpC subunit (190 aa).

A helical membrane pass occupies residues Thr-10 to Gly-30.

This sequence belongs to the KdpC family. The system is composed of three essential subunits: KdpA, KdpB and KdpC.

The protein localises to the cell inner membrane. Functionally, part of the high-affinity ATP-driven potassium transport (or Kdp) system, which catalyzes the hydrolysis of ATP coupled with the electrogenic transport of potassium into the cytoplasm. This subunit acts as a catalytic chaperone that increases the ATP-binding affinity of the ATP-hydrolyzing subunit KdpB by the formation of a transient KdpB/KdpC/ATP ternary complex. This is Potassium-transporting ATPase KdpC subunit from Shigella flexneri serotype 5b (strain 8401).